A 173-amino-acid chain; its full sequence is Crossover junction endodeoxyribonuclease RuvC (173 aa).

Active-site residues include aspartate 8, glutamate 67, and aspartate 139. Positions 8, 67, and 139 each coordinate Mg(2+).

It belongs to the RuvC family. As to quaternary structure, homodimer which binds Holliday junction (HJ) DNA. The HJ becomes 2-fold symmetrical on binding to RuvC with unstacked arms; it has a different conformation from HJ DNA in complex with RuvA. In the full resolvosome a probable DNA-RuvA(4)-RuvB(12)-RuvC(2) complex forms which resolves the HJ. It depends on Mg(2+) as a cofactor.

The protein resides in the cytoplasm. It carries out the reaction Endonucleolytic cleavage at a junction such as a reciprocal single-stranded crossover between two homologous DNA duplexes (Holliday junction).. Its function is as follows. The RuvA-RuvB-RuvC complex processes Holliday junction (HJ) DNA during genetic recombination and DNA repair. Endonuclease that resolves HJ intermediates. Cleaves cruciform DNA by making single-stranded nicks across the HJ at symmetrical positions within the homologous arms, yielding a 5'-phosphate and a 3'-hydroxyl group; requires a central core of homology in the junction. The consensus cleavage sequence is 5'-(A/T)TT(C/G)-3'. Cleavage occurs on the 3'-side of the TT dinucleotide at the point of strand exchange. HJ branch migration catalyzed by RuvA-RuvB allows RuvC to scan DNA until it finds its consensus sequence, where it cleaves and resolves the cruciform DNA. The protein is Crossover junction endodeoxyribonuclease RuvC of Serratia proteamaculans (strain 568).